The primary structure comprises 86 residues: Large ribosomal subunit protein bL35m (86 aa).

The transit peptide at 1-18 (MLVVFQRVVRATVLVGRK) directs the protein to the mitochondrion. The tract at residues 45 to 69 (RKHAGAQHLNRDTSSSTRARQRQWE) is disordered.

It belongs to the bacterial ribosomal protein bL35 family. In terms of assembly, component of the mitochondrial large ribosomal subunit (mt-LSU). Mature yeast 74S mitochondrial ribosomes consist of a small (37S) and a large (54S) subunit. The 37S small subunit contains a 15S ribosomal RNA (15S mt-rRNA) and at least 32 different proteins. The 54S large subunit contains a 21S rRNA (21S mt-rRNA) and at least 45 different proteins.

The protein resides in the mitochondrion. In terms of biological role, component of the mitochondrial ribosome (mitoribosome), a dedicated translation machinery responsible for the synthesis of mitochondrial genome-encoded proteins, including at least some of the essential transmembrane subunits of the mitochondrial respiratory chain. The mitoribosomes are attached to the mitochondrial inner membrane and translation products are cotranslationally integrated into the membrane. The sequence is that of Large ribosomal subunit protein bL35m (new15) from Schizosaccharomyces pombe (strain 972 / ATCC 24843) (Fission yeast).